A 1346-amino-acid chain; its full sequence is Adhesion G protein-coupled receptor F5 (1346 aa).

The first 21 residues, Met-1–Ala-21, serve as a signal peptide directing secretion. Topologically, residues Ala-22–Ser-1006 are extracellular. N-linked (GlcNAc...) asparagine glycosylation is found at Asn-73, Asn-94, Asn-106, Asn-188, Asn-256, Asn-272, Asn-301, Asn-315, Asn-328, Asn-398, Asn-472, Asn-487, Asn-505, Asn-540, Asn-627, Asn-649, Asn-666, Asn-820, Asn-931, Asn-963, and Asn-982. The SEA domain maps to Leu-166–Glu-273. Ig-like domains lie at Gln-267–Met-368, Pro-369–Thr-466, and Ala-471–Ile-561. 2 cysteine pairs are disulfide-bonded: Cys-293–Cys-350 and Cys-391–Cys-449. An intrachain disulfide couples Cys-492 to Cys-545. In terms of domain architecture, GAIN-B spans Pro-842 to Asp-1003. 2 cysteine pairs are disulfide-bonded: Cys-954–Cys-985 and Cys-973–Cys-987. The segment at Cys-954–Asp-1003 is GPS. Positions Thr-991–Ser-1006 are tethered agonist. The helical transmembrane segment at Leu-1007–Leu-1027 threads the bilayer. Over Ala-1028–Cys-1053 the chain is Cytoplasmic. Residues Ile-1054–Ile-1074 form a helical membrane-spanning segment. At Gln-1075–Thr-1090 the chain is on the extracellular side. A helical transmembrane segment spans residues Phe-1091–Leu-1111. Over Phe-1112–Lys-1128 the chain is Cytoplasmic. The chain crosses the membrane as a helical span at residues Ala-1129–Ala-1149. The Extracellular segment spans residues Thr-1150 to Leu-1173. A helical membrane pass occupies residues Ala-1174–Ile-1194. The Cytoplasmic portion of the chain corresponds to Thr-1195–Ser-1220. A helical transmembrane segment spans residues Ile-1221 to Pro-1241. The Extracellular portion of the chain corresponds to Gly-1242–Asn-1244. The chain crosses the membrane as a helical span at residues Leu-1245 to Phe-1265. The Cytoplasmic segment spans residues Gly-1266 to Asn-1346. Position 1300 is a phosphothreonine (Thr-1300). Ser-1307 is subject to Phosphoserine. The interval Thr-1327 to Asn-1346 is disordered. A compositionally biased stretch (low complexity) spans Glu-1329–Asn-1346.

Belongs to the G-protein coupled receptor 2 family. Adhesion G-protein coupled receptor (ADGR) subfamily. In terms of assembly, homodimer; disulfide-linked. Heterodimer of 2 chains generated by proteolytic processing; the large extracellular N-terminal fragment and the membrane-bound C-terminal fragment predominantly remain associated and non-covalently linked. Fragment generates by the processing enzyme furin remains attached to the extracellular N-terminal fragment. Interacts (via N-terminal extracellular domain) with SFTPD. In terms of processing, highly glycosylated. Proteolytically cleaved at multiple sites: one in the GPS region of the GAIN-B domain (S1 site) and the other in the SEA domain (S2 site). The proteolytic cleavage at S1 site generates an extracellular subunit and a seven-transmembrane subunit. The proteolytic cleavage at S2 site generates a fragment that undergoes proteolytic cleavage by the processing enzyme furin. As to expression, expressed in lung endothelial cells and in alveolar type II (ATII) cells (at protein level). Expressed high levels in subcutaneous adipose tissue in lean individuals and at lower levels in visceral fat. Expression levels in subcutaneous adipose tissue drastically drop in obese individuals.

The protein localises to the cell membrane. Its activity is regulated as follows. As an adhesion G protein-coupled receptor (aGPCR) exhibits a large N-terminal extracellular domain containing highly conserved GPCR autoproteolysis-inducing (GAIN) domain. During synthesis, intracellular autoproteolytic processing of nascent chain within the GAIN domain generates a mature protein, consisting of an N-terminal fragment that is non-covalently linked to the C-terminal fragment. The mature protein is routed to the plasma membrane where the N- and C-terminal fragments remain associated, forming the holoreceptor. Dissociation of the aGPCR fragments stimulates G protein signaling through the action of the tethered-peptide agonist stalk that is occluded within the GAIN domain in the holoreceptor form. This dissociation might be induced by ligand binding, such as that of sFNDC4. Its function is as follows. Adhesion G protein-coupled receptor. In alveolar type II (ATII or AT2) cells, required for normal lung surfactant homeostasis. Modulation of both surfactant secretion and uptake by ATII cells is mediated by the downstream activation of GNAQ/GNA11 proteins and may be a consequence of increased cortical F-actin assembly induced by ADGRF5 activation. In the kidney, may play a role in the regulation of acid excretion into the primary urine, possibly by regulating the surface expression of V-ATPase proton pump. As a receptor for soluble FNDC4 (sFNDC4), required for proper systemic glucose tolerance, specifically sensitizing white adipose tissue to insulin. Also plays a role in sFNDC4-induced decrease of local inflammation in white adipose tissue. This is Adhesion G protein-coupled receptor F5 from Homo sapiens (Human).